Here is a 331-residue protein sequence, read N- to C-terminus: Mycothiol acetyltransferase (331 aa).

Glutamate 33 is a binding site for 1D-myo-inositol 2-(L-cysteinylamino)-2-deoxy-alpha-D-glucopyranoside. Residues 59-86 (HAAEATAGSAASADPADPADPAAPADPA) are compositionally biased toward low complexity. A disordered region spans residues 59 to 89 (HAAEATAGSAASADPADPADPAAPADPADPA). 115 to 120 (RRGHGS) serves as a coordination point for acetyl-CoA. Positions 183–331 (LRLDTFEESR…DVQLRATERG (149 aa)) constitute an N-acetyltransferase domain. 1D-myo-inositol 2-(L-cysteinylamino)-2-deoxy-alpha-D-glucopyranoside is bound by residues glutamate 210, lysine 249, and glutamate 261. 265-267 (VAT) is a binding site for acetyl-CoA. Tyrosine 299 contributes to the 1D-myo-inositol 2-(L-cysteinylamino)-2-deoxy-alpha-D-glucopyranoside binding site. An acetyl-CoA-binding site is contributed by 304–309 (NAPALR).

Belongs to the acetyltransferase family. MshD subfamily. Monomer.

It catalyses the reaction 1D-myo-inositol 2-(L-cysteinylamino)-2-deoxy-alpha-D-glucopyranoside + acetyl-CoA = mycothiol + CoA + H(+). Functionally, catalyzes the transfer of acetyl from acetyl-CoA to desacetylmycothiol (Cys-GlcN-Ins) to form mycothiol. The chain is Mycothiol acetyltransferase from Brachybacterium faecium (strain ATCC 43885 / DSM 4810 / JCM 11609 / LMG 19847 / NBRC 14762 / NCIMB 9860 / 6-10).